The sequence spans 169 residues: Ribosome-binding factor A (169 aa).

Positions 124–169 (AGAKHAGDADPYKSDIPEDVEIDEDDFDEEDEDLIDDEELDEDGNK) are disordered. Over residues 128-139 (HAGDADPYKSDI) the composition is skewed to basic and acidic residues. A compositionally biased stretch (acidic residues) spans 140-169 (PEDVEIDEDDFDEEDEDLIDDEELDEDGNK).

It belongs to the RbfA family. In terms of assembly, monomer. Binds 30S ribosomal subunits, but not 50S ribosomal subunits or 70S ribosomes.

It is found in the cytoplasm. In terms of biological role, one of several proteins that assist in the late maturation steps of the functional core of the 30S ribosomal subunit. Associates with free 30S ribosomal subunits (but not with 30S subunits that are part of 70S ribosomes or polysomes). Required for efficient processing of 16S rRNA. May interact with the 5'-terminal helix region of 16S rRNA. The polypeptide is Ribosome-binding factor A (Arthrobacter sp. (strain FB24)).